A 637-amino-acid chain; its full sequence is Chaperone protein HtpG (637 aa).

The segment at 1–345 (MSQQETHGFQ…SNDLPLNVSR (345 aa)) is a; substrate-binding. Residues 346 to 562 (EILQDNHVTK…DGEMSTQMIK (217 aa)) are b. The tract at residues 563–637 (LMQAAGQPVP…MNQMLLANMK (75 aa)) is c.

This sequence belongs to the heat shock protein 90 family. Homodimer.

The protein localises to the cytoplasm. In terms of biological role, molecular chaperone. Has ATPase activity. This Shewanella baltica (strain OS155 / ATCC BAA-1091) protein is Chaperone protein HtpG.